The chain runs to 679 residues: Sodium-dependent phosphate transporter 1 (679 aa).

A run of 6 helical transmembrane segments spans residues Y21–A41, A62–S82, G100–A120, I158–F178, A203–F223, and G230–V250. A phosphoserine mark is found at S265 and S269. The next 4 helical transmembrane spans lie at V511–G531, V558–V578, F600–I620, and I650–A670. The segment at D550–V558 is a.

The protein belongs to the inorganic phosphate transporter (PiT) (TC 2.A.20) family. In terms of tissue distribution, ubiquitously expressed.

It localises to the cell membrane. It carries out the reaction 2 Na(+)(out) + phosphate(out) = 2 Na(+)(in) + phosphate(in). Functionally, sodium-phosphate symporter which preferentially transports the monovalent form of phosphate with a stoichiometry of two sodium ions per phosphate ion. May play a role in extracellular matrix and cartilage calcification as well as in vascular calcification. Essential for cell proliferation but this function is independent of its phosphate transporter activity. Its function is as follows. (Microbial infection) May function as a retroviral receptor as it confers human cells susceptibility to infection to Gibbon Ape Leukemia Virus (GaLV), Simian sarcoma-associated virus (SSAV) and Feline leukemia virus subgroup B (FeLV-B) as well as 10A1 murine leukemia virus (10A1 MLV). The chain is Sodium-dependent phosphate transporter 1 (SLC20A1) from Homo sapiens (Human).